A 396-amino-acid polypeptide reads, in one-letter code: Putative nickel insertion protein (396 aa).

Belongs to the LarC family.

The chain is Putative nickel insertion protein from Methanosarcina mazei (strain ATCC BAA-159 / DSM 3647 / Goe1 / Go1 / JCM 11833 / OCM 88) (Methanosarcina frisia).